The chain runs to 343 residues: MCSKITLVLTLFSSYFISTDAVNGSFPALLAFGDSILDTGNNNFLLTFMKGNIWPYGRSFSMRRATGRFGNGRVFSDIVAEGLGIKKILPAYRKLFNSPSDLRTGVCFASGGAGVDPVTSKLLRVLTPKDQVNDFKGYIRKLKATAGPSRASSIVSNAVILVSQGNNDIGISYFGTPTAAFRGLTPNRYTTKLAGWNKQFMKELYDQGARKFAVMGVIPLGCLPMTRIFLGGFVITCNFFANRVAEQYNGKLRSGTKSWGREAGFRGAKFVYVDMYNTLMDVIKNYRRYGFSNEKNGCCCMITAIIPCPNPDKYVFYDFVHPSEKAYRTISKKLVQDIKNGLA.

The N-terminal stretch at 1-21 (MCSKITLVLTLFSSYFISTDA) is a signal peptide. A glycan (N-linked (GlcNAc...) asparagine) is linked at Asn23. The Nucleophile role is filled by Ser35. Residues Asp318 and His321 contribute to the active site.

Belongs to the 'GDSL' lipolytic enzyme family. Flower buds and pollen.

The protein localises to the secreted. Its subcellular location is the extracellular space. It localises to the extracellular matrix. The protein resides in the pollen coat. Required for the formation of pollen coats and male fertility. This is GDSL esterase/lipase EXL4 (EXL4) from Arabidopsis thaliana (Mouse-ear cress).